The following is a 197-amino-acid chain: Protein lin-7 homolog C (197 aa).

Position 2 is an N-acetylalanine (alanine 2). The short motif at 2-13 (AALGEPVRLERD) is the Kinase interacting site element. The 56-residue stretch at 10–65 (LERDICRAIELLEKLQRSGEVPPQKLQALQRVLQSEFCNAVREVYEHVYETVDISS) folds into the L27 domain. The PDZ domain maps to 93–175 (VVELPKTEEG…KVKLVVRYTP (83 aa)).

This sequence belongs to the lin-7 family. Forms a complex with CASK and APBA1 or CASKIN1. Component of the brain-specific heterotrimeric complex (LIN-10-LIN-2-LIN-7 complex) composed of at least APBA1, CASK, and LIN7, which associates with the motor protein KIF17 to transport vesicles along microtubules. Can also interact with other modular proteins containing protein-protein interaction domains like PALS1, PALS2, MPP7, DLG1, DLG2 and DLG3 through its L27 domain. Interacts with DLG4 and GRIN2B as well as CDH1 and CTNNB1, the channels KCNJ12/Kir2.2, KCNJ4/Kir2.3 and probably KCNJ2/Kir2.1 and SLC6A12/BGT-1 via its PDZ domain. The association of LIN7A with cadherin and beta-catenin is calcium-dependent, occurs at synaptic junctions and requires the actin cytoskeleton. Interacts with EGFR, ERBB2, ERBB3 and ERBB4 with both PDZ and KID domains. Associates with KIF17 via APBA1. Interacts with HTR4. Forms a tripartite complex composed of DLG1, MPP7 and LIN7 (LIN7A or LIN7C). Interacts with MAPK12.

The protein resides in the cell membrane. Its subcellular location is the basolateral cell membrane. It is found in the cell junction. It localises to the postsynaptic density membrane. The protein localises to the tight junction. The protein resides in the synapse. Its subcellular location is the synaptosome. Its function is as follows. Plays a role in establishing and maintaining the asymmetric distribution of channels and receptors at the plasma membrane of polarized cells. Forms membrane-associated multiprotein complexes that may regulate delivery and recycling of proteins to the correct membrane domains. The tripartite complex composed of LIN7 (LIN7A, LIN7B or LIN7C), CASK and APBA1 associates with the motor protein KIF17 to transport vesicles containing N-methyl-D-aspartate (NMDA) receptor subunit NR2B along microtubules. This complex may have the potential to couple synaptic vesicle exocytosis to cell adhesion in brain. Ensures the proper localization of GRIN2B (subunit 2B of the NMDA receptor) to neuronal postsynaptic density and may function in localizing synaptic vesicles at synapses where it is recruited by beta-catenin and cadherin. Required to localize Kir2 channels, GABA transporter (SLC6A12) and EGFR/ERBB1, ERBB2, ERBB3 and ERBB4 to the basolateral membrane of epithelial cells. This is Protein lin-7 homolog C (LIN7C) from Bos taurus (Bovine).